The chain runs to 30 residues: SIPCGESCVWIPCTITALAGCKCKSKVCYN.

The cyclopeptide (Ser-Asn) cross-link spans 1 to 30 (SIPCGESCVWIPCTITALAGCKCKSKVCYN). 3 cysteine pairs are disulfide-bonded: Cys-4–Cys-21, Cys-8–Cys-23, and Cys-13–Cys-28.

In terms of processing, this is a cyclic peptide.

Probably participates in a plant defense mechanism. In Viola odorata (Sweet violet), this protein is Cycloviolacin-O7.